Reading from the N-terminus, the 836-residue chain is DNA-directed RNA polymerase subunit beta' (836 aa).

4 residues coordinate Zn(2+): C71, C73, C90, and C93. Mg(2+) contacts are provided by D623, D625, and D627.

The protein belongs to the RNA polymerase beta' chain family. RpoC1 subfamily. In terms of assembly, in plastids the minimal PEP RNA polymerase catalytic core is composed of four subunits: alpha, beta, beta', and beta''. When a (nuclear-encoded) sigma factor is associated with the core the holoenzyme is formed, which can initiate transcription. Requires Mg(2+) as cofactor. It depends on Zn(2+) as a cofactor.

It is found in the plastid. It localises to the chloroplast. It catalyses the reaction RNA(n) + a ribonucleoside 5'-triphosphate = RNA(n+1) + diphosphate. DNA-dependent RNA polymerase catalyzes the transcription of DNA into RNA using the four ribonucleoside triphosphates as substrates. The polypeptide is DNA-directed RNA polymerase subunit beta' (rpoC1) (Chlorella vulgaris (Green alga)).